The primary structure comprises 93 residues: Small ribosomal subunit protein uS19 (93 aa).

Belongs to the universal ribosomal protein uS19 family.

Functionally, protein S19 forms a complex with S13 that binds strongly to the 16S ribosomal RNA. This chain is Small ribosomal subunit protein uS19, found in Rhodococcus erythropolis (strain PR4 / NBRC 100887).